Consider the following 373-residue polypeptide: Histidinol-phosphate aminotransferase (373 aa).

At Lys233 the chain carries N6-(pyridoxal phosphate)lysine.

Belongs to the class-II pyridoxal-phosphate-dependent aminotransferase family. Histidinol-phosphate aminotransferase subfamily. Homodimer. Pyridoxal 5'-phosphate is required as a cofactor.

It catalyses the reaction L-histidinol phosphate + 2-oxoglutarate = 3-(imidazol-4-yl)-2-oxopropyl phosphate + L-glutamate. Its pathway is amino-acid biosynthesis; L-histidine biosynthesis; L-histidine from 5-phospho-alpha-D-ribose 1-diphosphate: step 7/9. The chain is Histidinol-phosphate aminotransferase from Nitratidesulfovibrio vulgaris (strain DP4) (Desulfovibrio vulgaris).